Reading from the N-terminus, the 203-residue chain is MPSSLHAPLSGEVSAFSLSCPYFRCQDSTGEDLGRFPSPLPFLMCLLLFFPFRARWPRLMSSEKPGESPKPQKMAQPGGSQKKETSRSVPVTDPTSHNSEINQRDQQFSDMHLADLQKVFEKEADENGALKKEGFIRIMKGVLSSMSEEMLELLFLKVDSDCNGFVTWQKYVDYMMREFQGKEEMRKSQYRLRFHLPMTVIPL.

Residues 61 to 107 (SSEKPGESPKPQKMAQPGGSQKKETSRSVPVTDPTSHNSEINQRDQQ) are disordered. Over residues 87 to 107 (RSVPVTDPTSHNSEINQRDQQ) the composition is skewed to polar residues. EF-hand domains are found at residues 111–145 (MHLADLQKVFEKEADENGALKKEGFIRIMKGVLSS) and 146–181 (MSEEMLELLFLKVDSDCNGFVTWQKYVDYMMREFQG).

The polypeptide is EF-hand calcium-binding domain-containing protein 8 (Efcab8) (Mus musculus (Mouse)).